A 98-amino-acid chain; its full sequence is Small ribosomal subunit protein bS6 (98 aa).

This sequence belongs to the bacterial ribosomal protein bS6 family.

Its function is as follows. Binds together with bS18 to 16S ribosomal RNA. The sequence is that of Small ribosomal subunit protein bS6 from Lactobacillus helveticus (strain DPC 4571).